Reading from the N-terminus, the 583-residue chain is Propane 2-monooxygenase operon transcriptional activator MimR (583 aa).

One can recognise a Sigma-54 factor interaction domain in the interval 320–513 (LAGRSSSFRR…LRHVLTETLR (194 aa)). ATP is bound by residues 348–355 (GEKGSGRT) and 395–404 (DADFAVIVAD).

Acts as a transcriptional activator of the mimABCD operon encoding the propane 2-monooxygenase complex. In Mycolicibacterium goodii (Mycobacterium goodii), this protein is Propane 2-monooxygenase operon transcriptional activator MimR.